A 178-amino-acid chain; its full sequence is Sec-independent protein translocase protein TatB (178 aa).

The helical transmembrane segment at 1–21 (MFDIGWSELLVIGVVALIAIG) threads the bilayer. Residues 146-178 (LAIVREIKPEPQPQPADGAAPAEPERLKDAKAS) are disordered. Over residues 168–178 (EPERLKDAKAS) the composition is skewed to basic and acidic residues.

The protein belongs to the TatB family. In terms of assembly, the Tat system comprises two distinct complexes: a TatABC complex, containing multiple copies of TatA, TatB and TatC subunits, and a separate TatA complex, containing only TatA subunits. Substrates initially bind to the TatABC complex, which probably triggers association of the separate TatA complex to form the active translocon.

The protein resides in the cell inner membrane. Functionally, part of the twin-arginine translocation (Tat) system that transports large folded proteins containing a characteristic twin-arginine motif in their signal peptide across membranes. Together with TatC, TatB is part of a receptor directly interacting with Tat signal peptides. TatB may form an oligomeric binding site that transiently accommodates folded Tat precursor proteins before their translocation. The chain is Sec-independent protein translocase protein TatB from Bradyrhizobium sp. (strain ORS 278).